The primary structure comprises 347 residues: Phenylalanine--tRNA ligase alpha subunit (347 aa).

Position 265 (glutamate 265) interacts with Mg(2+).

This sequence belongs to the class-II aminoacyl-tRNA synthetase family. Phe-tRNA synthetase alpha subunit type 1 subfamily. Tetramer of two alpha and two beta subunits. Requires Mg(2+) as cofactor.

It is found in the cytoplasm. The enzyme catalyses tRNA(Phe) + L-phenylalanine + ATP = L-phenylalanyl-tRNA(Phe) + AMP + diphosphate + H(+). The sequence is that of Phenylalanine--tRNA ligase alpha subunit from Mycolicibacterium gilvum (strain PYR-GCK) (Mycobacterium gilvum (strain PYR-GCK)).